We begin with the raw amino-acid sequence, 329 residues long: G-protein coupled bile acid receptor 1 (329 aa).

At 1-19 (MTSNSTREVPSPVPAGALG) the chain is on the extracellular side. The N-linked (GlcNAc...) asparagine glycan is linked to asparagine 4. A helical transmembrane segment spans residues 20–40 (LSLALASLIVAANLLLAVGIA). Residues 41–52 (GDRRLRSPPAGC) are Cytoplasmic-facing. Residues 53–73 (FFLSLLLAGLLTGLALPALPV) traverse the membrane as a helical segment. Residues 74-85 (LWSQSRRGYWSC) lie on the Extracellular side of the membrane. A disulfide bond links cysteine 85 and cysteine 155. A helical transmembrane segment spans residues 86–106 (LFLYLAPNFCFLSLLANLLLV). Residues 107-125 (HGERYMAVLRPLRPRGSMR) lie on the Cytoplasmic side of the membrane. A helical transmembrane segment spans residues 126 to 146 (LALLLTWAAPLLFASLPALGW). The Extracellular portion of the chain corresponds to 147 to 165 (NHWAPGGNCSSQAVFPAPY). N-linked (GlcNAc...) asparagine glycosylation is present at asparagine 154. The chain crosses the membrane as a helical span at residues 166-186 (LYLEIYGLLLPAVGAAALLSV). Residues 187 to 230 (RVLVTAHRQLQDIRRLERAVCRGAPSALARALTWRQARAQAGAT) are Cytoplasmic-facing. Residues 231–251 (LLFGLCWGPYVATLLLSVLAF) form a helical membrane-spanning segment. Residues 252–261 (EQRPPLGPGT) are Extracellular-facing. Residues 262–282 (LLSLISLGSASAAAVPVAMGL) form a helical membrane-spanning segment. Over 283–329 (GDQRYTGPWRVAAQKWLRMLRGRPQSSPGPSTAYHTSSQSSVDLDLN) the chain is Cytoplasmic. The interval 304-329 (GRPQSSPGPSTAYHTSSQSSVDLDLN) is disordered. Positions 306–329 (PQSSPGPSTAYHTSSQSSVDLDLN) are enriched in polar residues.

It belongs to the G-protein coupled receptor 1 family.

The protein localises to the cell membrane. In terms of biological role, receptor for bile acid. Bile acid-binding induces its internalization, activation of extracellular signal-regulated kinase and intracellular cAMP production. May be involved in the suppression of macrophage functions by bile acids. Involved in bile acid promoted GLP1R secretion. This Bos taurus (Bovine) protein is G-protein coupled bile acid receptor 1 (GPBAR1).